Reading from the N-terminus, the 256-residue chain is Acetylglutamate kinase (256 aa).

Residues Gly40 to Gly41, Arg62, and Asn154 each bind substrate.

It belongs to the acetylglutamate kinase family. ArgB subfamily.

Its subcellular location is the cytoplasm. It catalyses the reaction N-acetyl-L-glutamate + ATP = N-acetyl-L-glutamyl 5-phosphate + ADP. It functions in the pathway amino-acid biosynthesis; L-arginine biosynthesis; N(2)-acetyl-L-ornithine from L-glutamate: step 2/4. In terms of biological role, catalyzes the ATP-dependent phosphorylation of N-acetyl-L-glutamate. The chain is Acetylglutamate kinase from Staphylococcus aureus (strain MRSA252).